The following is a 241-amino-acid chain: Protein GrpE (241 aa).

Basic and acidic residues predominate over residues 28–49 (QNCQKEETQTTNKDNQKEDETF). Residues 28–78 (QNCQKEETQTTNKDNQKEDETFKNQPNKTKQTNTKQQKHLSKESSHQQITK) are disordered. Positions 50–62 (KNQPNKTKQTNTK) are enriched in low complexity.

This sequence belongs to the GrpE family. As to quaternary structure, homodimer.

It is found in the cytoplasm. In terms of biological role, participates actively in the response to hyperosmotic and heat shock by preventing the aggregation of stress-denatured proteins, in association with DnaK and GrpE. It is the nucleotide exchange factor for DnaK and may function as a thermosensor. Unfolded proteins bind initially to DnaJ; upon interaction with the DnaJ-bound protein, DnaK hydrolyzes its bound ATP, resulting in the formation of a stable complex. GrpE releases ADP from DnaK; ATP binding to DnaK triggers the release of the substrate protein, thus completing the reaction cycle. Several rounds of ATP-dependent interactions between DnaJ, DnaK and GrpE are required for fully efficient folding. The polypeptide is Protein GrpE (Aster yellows witches'-broom phytoplasma (strain AYWB)).